The following is a 200-amino-acid chain: Prostamide/prostaglandin F synthase (200 aa).

This sequence belongs to the peroxiredoxin-like PRXL2 family. Prostamide/prostaglandin F synthase subfamily.

It localises to the cytoplasm. The protein localises to the cytosol. The catalysed reaction is prostaglandin H2 + [thioredoxin]-dithiol = prostaglandin F2alpha + [thioredoxin]-disulfide. The enzyme catalyses prostamide F2alpha + [thioredoxin]-disulfide = prostamide H2 + [thioredoxin]-dithiol. Its function is as follows. Catalyzes the reduction of prostaglandin-ethanolamide H(2) (prostamide H(2)) to prostamide F(2alpha) with NADPH as proton donor. Also able to reduce prostaglandin H(2) to prostaglandin F(2alpha). The polypeptide is Prostamide/prostaglandin F synthase (prxl2b) (Salmo salar (Atlantic salmon)).